Reading from the N-terminus, the 526-residue chain is Anthranilate synthase component 1 (526 aa).

L-tryptophan contacts are provided by residues Ser-40 and 304 to 306 (PYM). 341 to 342 (GT) is a chorismate binding site. A Mg(2+)-binding site is contributed by Glu-374. Residues Tyr-461, Arg-481, 495–497 (GAG), and Gly-497 each bind chorismate. Glu-510 lines the Mg(2+) pocket.

It belongs to the anthranilate synthase component I family. As to quaternary structure, heterotetramer consisting of two non-identical subunits: a beta subunit (TrpG) and a large alpha subunit (TrpE). It depends on Mg(2+) as a cofactor.

The catalysed reaction is chorismate + L-glutamine = anthranilate + pyruvate + L-glutamate + H(+). Its pathway is amino-acid biosynthesis; L-tryptophan biosynthesis; L-tryptophan from chorismate: step 1/5. Its activity is regulated as follows. Feedback inhibited by tryptophan. In terms of biological role, part of a heterotetrameric complex that catalyzes the two-step biosynthesis of anthranilate, an intermediate in the biosynthesis of L-tryptophan. In the first step, the glutamine-binding beta subunit (TrpG) of anthranilate synthase (AS) provides the glutamine amidotransferase activity which generates ammonia as a substrate that, along with chorismate, is used in the second step, catalyzed by the large alpha subunit of AS (TrpE) to produce anthranilate. In the absence of TrpG, TrpE can synthesize anthranilate directly from chorismate and high concentrations of ammonia. This Buchnera aphidicola subsp. Tetraneura caerulescens protein is Anthranilate synthase component 1 (trpE).